Reading from the N-terminus, the 509-residue chain is Maturase K (509 aa).

Belongs to the intron maturase 2 family. MatK subfamily.

Its subcellular location is the plastid. The protein localises to the chloroplast. Functionally, usually encoded in the trnK tRNA gene intron. Probably assists in splicing its own and other chloroplast group II introns. In Clematis florida (Asian virgin's bower), this protein is Maturase K.